The sequence spans 348 residues: Phospho-2-dehydro-3-deoxyheptonate aldolase, Trp-sensitive (348 aa).

The protein belongs to the class-I DAHP synthase family.

It carries out the reaction D-erythrose 4-phosphate + phosphoenolpyruvate + H2O = 7-phospho-2-dehydro-3-deoxy-D-arabino-heptonate + phosphate. The protein operates within metabolic intermediate biosynthesis; chorismate biosynthesis; chorismate from D-erythrose 4-phosphate and phosphoenolpyruvate: step 1/7. In terms of biological role, stereospecific condensation of phosphoenolpyruvate (PEP) and D-erythrose-4-phosphate (E4P) giving rise to 3-deoxy-D-arabino-heptulosonate-7-phosphate (DAHP). In Enterobacter agglomerans (Erwinia herbicola), this protein is Phospho-2-dehydro-3-deoxyheptonate aldolase, Trp-sensitive (aroH).